The sequence spans 750 residues: DDT domain-containing protein DDR4 (750 aa).

The segment at 1-125 (MGSSSDIVPD…ITSLVPPPEP (125 aa)) is disordered. The segment covering 45–54 (RAQQRLQELQ) has biased composition (low complexity). Basic and acidic residues predominate over residues 55-77 (AAERKLKPPKKEYKREQHRRREE). Acidic residues predominate over residues 78–100 (VVEEDEDSEDDDQEDEENDGDDE). In terms of domain architecture, DDT spans 133–192 (LRSMWELASVLNFLHVFRPLLKINAEFSAEEFETALLTPNDTLSDIHIPLLKAIPPVTRM). Disordered stretches follow at residues 450-505 (NGRS…TDFV) and 532-750 (LKKR…TDNS). Residues 451-471 (GRSTSSTHPTEPVNDTASGRS) are compositionally biased toward polar residues. Residues 545-585 (EGDEEKGDEEYKWDEDNAEYEEEEEEEEEEDSLSASEEDSD) show a composition bias toward acidic residues. Residues 595 to 606 (RRETKLRSRSND) show a composition bias toward basic and acidic residues. Residues 688-707 (NADTTNGKENNQLNKSNGTT) show a composition bias toward polar residues. The segment covering 741–750 (LKDDDKTDNS) has biased composition (basic and acidic residues).

Interacts (via the DDT domain) with CHR11 (via C-terminus).

The protein localises to the nucleus. Functionally, probable transcription regulator. This is DDT domain-containing protein DDR4 from Arabidopsis thaliana (Mouse-ear cress).